A 261-amino-acid polypeptide reads, in one-letter code: Putative diacylated glycolipid transporter LprF (261 aa).

The signal sequence occupies residues Met-1–Gly-38. Cys-39 carries the N-palmitoyl cysteine lipid modification. A lipid anchor (S-diacylglycerol cysteine) is attached at Cys-39. Residues Lys-42 to Ile-61 are disordered.

The protein belongs to the LppX/LprAFG lipoprotein family. Monomer. In terms of processing, modified by Lgt on Cys-39 with an S-linked diacylglycerol with a mixture of C16, C18 and C19 fatty acids (palmitic, stearic and tuberculostearic acid respectively), signal peptide is removed by LspA, modified by Lnt with an amide-linked mixture of C16 and C19 fatty acids.

The protein localises to the cell membrane. Its function is as follows. Might be involved in transporting short diacylated glycolipids to the cell outer membrane. Binds glycolipids that contain a diacylated glycerophosphate or a diacylated phosphatidylinositol moiety with C14 and C16 chains (upon overexpression in M.smegmatis; M.smegmatis does not encode this gene). Overexpression in M.smegmatis increases the cell wall glycolipid LAM/LM ratio (lipoarabinomannan/lipomannan), suggesting perhaps this protein is involved in the preferential translocation of diacylated LAM to the outer cell membrane. Overexpressing M.smegmatis cells adhere less well to hexadecane droplets, indicating decrease in the hydrophobicity of the cell surface, and have a slightly increased resistance to the antibiotic ethambutol. The protein is Putative diacylated glycolipid transporter LprF (lprF) of Mycobacterium bovis (strain ATCC BAA-935 / AF2122/97).